Here is a 665-residue protein sequence, read N- to C-terminus: Beta-galactosidase LacZ (665 aa).

Arginine 110 contacts substrate. Residue cysteine 114 participates in Zn(2+) binding. Residue asparagine 148 participates in substrate binding. Residue glutamate 149 is the Proton donor of the active site. Zn(2+)-binding residues include cysteine 157, cysteine 159, and cysteine 162. The active-site Nucleophile is glutamate 303. Substrate contacts are provided by residues tryptophan 311 and 351–354 (EKFH).

This sequence belongs to the glycosyl hydrolase 42 family.

It catalyses the reaction Hydrolysis of terminal non-reducing beta-D-galactose residues in beta-D-galactosides.. This is Beta-galactosidase LacZ from Heyndrickxia coagulans (Weizmannia coagulans).